The primary structure comprises 175 residues: Co-chaperone protein HscB homolog (175 aa).

The 73-residue stretch at Ser-7–Leu-79 folds into the J domain.

The protein belongs to the HscB family. As to quaternary structure, interacts with HscA and stimulates its ATPase activity.

In terms of biological role, co-chaperone involved in the maturation of iron-sulfur cluster-containing proteins. Seems to help targeting proteins to be folded toward HscA. The protein is Co-chaperone protein HscB homolog of Paraburkholderia phytofirmans (strain DSM 17436 / LMG 22146 / PsJN) (Burkholderia phytofirmans).